The sequence spans 274 residues: NADPH-dependent 7-cyano-7-deazaguanine reductase (274 aa).

80-82 (VES) provides a ligand contact to substrate. 82-83 (SK) is an NADPH binding site. The active-site Thioimide intermediate is Cys-181. Asp-188 acts as the Proton donor in catalysis. Position 220–221 (220–221 (HE)) interacts with substrate. 249–250 (RG) provides a ligand contact to NADPH.

Belongs to the GTP cyclohydrolase I family. QueF type 2 subfamily. In terms of assembly, homodimer.

It localises to the cytoplasm. It carries out the reaction 7-aminomethyl-7-carbaguanine + 2 NADP(+) = 7-cyano-7-deazaguanine + 2 NADPH + 3 H(+). The protein operates within tRNA modification; tRNA-queuosine biosynthesis. In terms of biological role, catalyzes the NADPH-dependent reduction of 7-cyano-7-deazaguanine (preQ0) to 7-aminomethyl-7-deazaguanine (preQ1). The chain is NADPH-dependent 7-cyano-7-deazaguanine reductase from Burkholderia pseudomallei (strain 1106a).